We begin with the raw amino-acid sequence, 356 residues long: uncharacterized protein (356 aa).

It localises to the cytoplasm. Its subcellular location is the nucleus. This is an uncharacterized protein from Saccharomyces cerevisiae (strain ATCC 204508 / S288c) (Baker's yeast).